Consider the following 229-residue polypeptide: Ras-related protein RabZ (229 aa).

The interval 1-39 (MGCFHSREPTATGKTKKEEPTSAVKTNKEEKSSNYVSEP) is disordered. The N-myristoyl glycine moiety is linked to residue G2. Residue C3 is the site of S-palmitoyl cysteine attachment. Residues 15–32 (TKKEEPTSAVKTNKEEKS) are compositionally biased toward basic and acidic residues. Position 57–64 (57–64 (GDQATGKS)) interacts with GTP. The Effector region motif lies at 79–88 (HKPSPIIIDC). GTP contacts are provided by residues 106–110 (DTAGQ) and 164–167 (NKCD).

Belongs to the small GTPase superfamily. Rab family. Although this sequence lacks the C-terminal cysteine motifs subject to isoprenylation in other Rab proteins, it does have N-terminal myristoylation and S-palmitoylation sequence motifs.

In Dictyostelium discoideum (Social amoeba), this protein is Ras-related protein RabZ (rabZ).